We begin with the raw amino-acid sequence, 309 residues long: Pseudouridine-5'-phosphate glycosidase 2 (309 aa).

E26 acts as the Proton donor in catalysis. Residues K87 and V107 each contribute to the substrate site. Residue D139 participates in Mn(2+) binding. Substrate is bound at residue 141-143 (SAD). The Nucleophile role is filled by K160.

It belongs to the pseudouridine-5'-phosphate glycosidase family. Homotrimer. It depends on Mn(2+) as a cofactor.

The enzyme catalyses D-ribose 5-phosphate + uracil = psi-UMP + H2O. In terms of biological role, catalyzes the reversible cleavage of pseudouridine 5'-phosphate (PsiMP) to ribose 5-phosphate and uracil. Functions biologically in the cleavage direction, as part of a pseudouridine degradation pathway. The sequence is that of Pseudouridine-5'-phosphate glycosidase 2 from Rhizobium johnstonii (strain DSM 114642 / LMG 32736 / 3841) (Rhizobium leguminosarum bv. viciae).